The following is a 560-amino-acid chain: Mitochondria-eating protein (560 aa).

Positions 1–294 (MADNLRKLVS…SHSRNHSRSR (294 aa)) are interaction with YWHAG/14-3-3 protein gamma. Phosphoserine is present on residues Ser-13, Ser-85, Ser-156, and Ser-159. Coiled coils occupy residues 118–186 (DRNI…SRHR) and 223–248 (DYEKQLRTLKDEIAVLSAEKSVLQGR). Disordered stretches follow at residues 178 to 217 (QAQEESRHRPPEHRSSEKRGSERRRVEPRGADRCGAAQRK) and 243 to 316 (SVLQ…AKLS). Positions 181-209 (EESRHRPPEHRSSEKRGSERRRVEPRGAD) are enriched in basic and acidic residues. The segment covering 248 to 262 (RSTRSRSPSPASCSR) has biased composition (low complexity). Basic residues predominate over residues 263–293 (SRSHSHSRSRSHSHSRSGSHSRSHSRNHSRS). Positions 300-310 (TAVSGVRSPSP) are enriched in polar residues. 3 positions are modified to phosphoserine: Ser-307, Ser-309, and Ser-531.

It belongs to the MIEAP family. Interacts (via coiled-coil domains) with BNIP3L (via BH3 domain). Interacts (via coiled-coil domains) with BNIP3 (via BH3 domain). Interacts with YWHAG/14-3-3 protein gamma; a protein that also plays a role in MALM.

The protein localises to the cytoplasm. Its subcellular location is the cytosol. The protein resides in the mitochondrion outer membrane. It localises to the mitochondrion matrix. Functionally, key regulator of mitochondrial quality that mediates the repairing or degradation of unhealthy mitochondria in response to mitochondrial damage. Mediator of mitochondrial protein catabolic process (also named MALM) by mediating the degradation of damaged proteins inside mitochondria by promoting the accumulation in the mitochondrial matrix of hydrolases that are characteristic of the lysosomal lumen. Also involved in mitochondrion degradation of damaged mitochondria by promoting the formation of vacuole-like structures (named MIV), which engulf and degrade unhealthy mitochondria by accumulating lysosomes. The physical interaction of SPATA18/MIEAP, BNIP3 and BNIP3L/NIX at the mitochondrial outer membrane regulates the opening of a pore in the mitochondrial double membrane in order to mediate the translocation of lysosomal proteins from the cytoplasm to the mitochondrial matrix. Binds cardiolipin. May form molecular condensates (non-membrane-bounded organelles) within mitochondria that compartmentalize and promote cardiolipin metabolism. The polypeptide is Mitochondria-eating protein (SPATA18) (Sus scrofa (Pig)).